The chain runs to 214 residues: Cdc42 effector protein 2 (214 aa).

Position 2 is an N-acetylserine (Ser2). In terms of domain architecture, CRIB spans 30-44 (ISPPLGDFRHTIHIG). 5 positions are modified to phosphoserine: Ser31, Ser101, Ser137, Ser141, and Ser145. Residues 119 to 177 (LTLPTAQAPPKPPRLHLESPQPSPQPSPQGAGNVDVWRIPEAGSPHNGMSPEPEAEEPF) form a disordered region.

The protein belongs to the BORG/CEP family. Interacts with CDC42 and RHOQ in a GTP-dependent manner, and with SEPT7.

It localises to the endomembrane system. The protein resides in the cytoplasm. It is found in the cytoskeleton. Functionally, probably involved in the organization of the actin cytoskeleton. May act downstream of CDC42 to induce actin filament assembly leading to cell shape changes. Induces pseudopodia formation in fibroblasts in a CDC42-dependent manner. This chain is Cdc42 effector protein 2 (Cdc42ep2), found in Mus musculus (Mouse).